A 513-amino-acid polypeptide reads, in one-letter code: GMP synthase [glutamine-hydrolyzing] (513 aa).

One can recognise a Glutamine amidotransferase type-1 domain in the interval 3 to 200 (SVTVLDFGSQ…LIDIAGIKPD (198 aa)). Cys80 (nucleophile) is an active-site residue. Catalysis depends on residues His174 and Glu176. Positions 201–388 (WSPKSFIGHQ…LGIAEDILMR (188 aa)) constitute a GMPS ATP-PPase domain. 228 to 234 (SGGVDST) contributes to the ATP binding site.

Homodimer.

The enzyme catalyses XMP + L-glutamine + ATP + H2O = GMP + L-glutamate + AMP + diphosphate + 2 H(+). The protein operates within purine metabolism; GMP biosynthesis; GMP from XMP (L-Gln route): step 1/1. Its function is as follows. Catalyzes the synthesis of GMP from XMP. This chain is GMP synthase [glutamine-hydrolyzing], found in Chlorobium phaeobacteroides (strain DSM 266 / SMG 266 / 2430).